The following is a 391-amino-acid chain: Na(+)/H(+) antiporter NhaA (391 aa).

Transmembrane regions (helical) follow at residues 14–34, 59–79, 95–115, 124–144, 154–174, 177–197, 213–233, 261–281, 287–307, 328–348, and 363–383; these read AGGI…NSPL, LLLW…GLEV, SLPT…YLFF, VGWA…MALL, VFLL…IALF, TDLS…LVAL, IILW…GVVI, FLIL…NVGF, PVPV…VLLF, IAPV…IASL, and IGIL…LSKV.

The protein belongs to the NhaA Na(+)/H(+) (TC 2.A.33) antiporter family.

It localises to the cell inner membrane. The catalysed reaction is Na(+)(in) + 2 H(+)(out) = Na(+)(out) + 2 H(+)(in). Its function is as follows. Na(+)/H(+) antiporter that extrudes sodium in exchange for external protons. The chain is Na(+)/H(+) antiporter NhaA from Shewanella amazonensis (strain ATCC BAA-1098 / SB2B).